The sequence spans 267 residues: NAD kinase (267 aa).

The active-site Proton acceptor is aspartate 45. NAD(+) is bound by residues 45 to 46, 121 to 122, arginine 147, aspartate 149, 160 to 165, and alanine 184; these read DG, NE, and TAYSKS.

It belongs to the NAD kinase family. Requires a divalent metal cation as cofactor.

It is found in the cytoplasm. The catalysed reaction is NAD(+) + ATP = ADP + NADP(+) + H(+). Its function is as follows. Involved in the regulation of the intracellular balance of NAD and NADP, and is a key enzyme in the biosynthesis of NADP. Catalyzes specifically the phosphorylation on 2'-hydroxyl of the adenosine moiety of NAD to yield NADP. This chain is NAD kinase, found in Lactobacillus acidophilus (strain ATCC 700396 / NCK56 / N2 / NCFM).